A 30-amino-acid polypeptide reads, in one-letter code: Bowman-Birk type proteinase inhibitor 4 (30 aa).

Intrachain disulfides connect C9–C24 and C14–C22.

Inhibits trypsin (IC(50)=17.60 nM) and, to a lesser extent, alpha-chymotrypsin (IC(50)=2.38 uM). The chain is Bowman-Birk type proteinase inhibitor 4 from Lathyrus sativus (White vetchling).